Reading from the N-terminus, the 83-residue chain is Large ribosomal subunit protein bL27 (83 aa).

Residues 1–25 (MAHKKGQGASRNGRDSESKRLGLKV) are disordered.

This sequence belongs to the bacterial ribosomal protein bL27 family.

This Chlamydia muridarum (strain MoPn / Nigg) protein is Large ribosomal subunit protein bL27.